Reading from the N-terminus, the 180-residue chain is Oligoribonuclease (180 aa).

Residues 7-168 form the Exonuclease domain; the sequence is LVWIDLEMTG…QDIRDSIDEL (162 aa). The active site involves Y128.

The protein belongs to the oligoribonuclease family.

Its subcellular location is the cytoplasm. Its function is as follows. 3'-to-5' exoribonuclease specific for small oligoribonucleotides. The chain is Oligoribonuclease from Dichelobacter nodosus (strain VCS1703A).